Here is a 32-residue protein sequence, read N- to C-terminus: Hainantoxin F8-35.23 (32 aa).

Expressed by the venom gland.

It is found in the secreted. The polypeptide is Hainantoxin F8-35.23 (Cyriopagopus hainanus (Chinese bird spider)).